The sequence spans 156 residues: Small ribosomal subunit protein uS7 (156 aa).

The protein belongs to the universal ribosomal protein uS7 family. In terms of assembly, part of the 30S ribosomal subunit. Contacts proteins S9 and S11.

One of the primary rRNA binding proteins, it binds directly to 16S rRNA where it nucleates assembly of the head domain of the 30S subunit. Is located at the subunit interface close to the decoding center, probably blocks exit of the E-site tRNA. In Desulforudis audaxviator (strain MP104C), this protein is Small ribosomal subunit protein uS7.